A 656-amino-acid polypeptide reads, in one-letter code: Spermatogenesis-associated protein 13 (656 aa).

The span at 1-12 shows a compositional bias: polar residues; that stretch reads MHPASVTTTSQD. Residues 1 to 26 are disordered; that stretch reads MHPASVTTTSQDPCAPSGSCRGGRRR. Phosphoserine is present on S82. The segment at 85-115 is disordered; that stretch reads IGLDRVGRRRQMKTSNVSSDGGAESSALVDD. The tract at residues 102-154 is ABR (APC-binding region) domain; that stretch reads SSDGGAESSALVDDNGSEEDFSYEELCQANPRYLQPGGEQLAINELISDGSVV. S118 bears the Phosphoserine mark. In terms of domain architecture, SH3 spans 151–210; sequence GSVVCAEALWDHVTMDDQELGFKAGDVIQVLEASNKDWWWGRNEDKEAWFPASFVRLRVN. A disordered region spans residues 215–242; it reads PENCSSSHGEEQDEDTSKARHKHPESQQ. Positions 244-428 constitute a DH domain; the sequence is MRTNVIQEIM…KNVACLINER (185 aa). In terms of domain architecture, PH spans 459–565; the sequence is ELIHSGELTK…WLQAYADERR (107 aa). Positions 565–656 are C-terminal tail; sequence RRVQEDQQMG…TFHKLTPFRK (92 aa).

Interacts (via ABR and SH3 domain) with APC. The binding of APC enhances its GEF activity by relieving it from an autoinhibitory conformation, in which the ABR and SH3 domains are associated with the C-terminal tail. Interacts (via C-terminal tail) with PPP1R9B (via C-terminus). Interacts with RAC1. In terms of tissue distribution, expression is aberrantly enhanced in most colorectal tumors.

It localises to the cytoplasm. It is found in the cell projection. Its subcellular location is the filopodium. The protein localises to the lamellipodium. The protein resides in the ruffle membrane. It localises to the podosome. Its activity is regulated as follows. Both the ABR and the SH3 domains contribute to maintaining the protein in an inhibited conformation by associating with the C-terminal tail. Binding of these domains to the C-terminal tail inhibits the activity of the protein by blocking a region that is required for its GEF activity. In terms of biological role, acts as a guanine nucleotide exchange factor (GEF) for RHOA, RAC1 and CDC42 GTPases. Regulates cell migration and adhesion assembly and disassembly through a RAC1, PI3K, RHOA and AKT1-dependent mechanism. Increases both RAC1 and CDC42 activity, but decreases the amount of active RHOA. Required for MMP9 up-regulation via the JNK signaling pathway in colorectal tumor cells. Involved in tumor angiogenesis and may play a role in intestinal adenoma formation and tumor progression. In Mus musculus (Mouse), this protein is Spermatogenesis-associated protein 13 (Spata13).